A 273-amino-acid polypeptide reads, in one-letter code: Patr class II histocompatibility antigen, DO beta chain (273 aa).

Residues 1 to 26 (MGSGWVPWVVALLVNLTRLDSSMTQG) form the signal peptide. The segment at 27-120 (TDSPEDFVIQ…LGAPFTVGRK (94 aa)) is beta-1. Residues 27–224 (TDSPEDFVIQ…RAQSEYSWKK (198 aa)) are Extracellular-facing. 2 cysteine pairs are disulfide-bonded: C41/C105 and C143/C199. N-linked (GlcNAc...) asparagine glycosylation is present at N45. Residues 121 to 214 (VQPEVTVYPE…SLLSPVSVEW (94 aa)) are beta-2. Residues 123–213 (PEVTVYPERT…SSLLSPVSVE (91 aa)) form the Ig-like C1-type domain. The connecting peptide stretch occupies residues 215 to 224 (RAQSEYSWKK). The chain crosses the membrane as a helical span at residues 225 to 245 (MLSGIAAFLLGLIFLLVGIVI). Residues 246 to 273 (QLRAQKGYVRTQMSGNEVSRAVLLPQSC) are Cytoplasmic-facing.

It belongs to the MHC class II family. Heterodimer of an alpha chain (DOA) and a beta chain (DOB). Forms a heterotetrameric complex with an HLA-DM molecule during intracellular transport in endosomal/lysosomal compartments in B-cells.

It localises to the endosome membrane. It is found in the lysosome membrane. Its function is as follows. Important modulator in the HLA class II restricted antigen presentation pathway by interaction with the HLA-DM molecule in B-cells. Modifies peptide exchange activity of HLA-DM. In Pan troglodytes (Chimpanzee), this protein is Patr class II histocompatibility antigen, DO beta chain (Patr-DOB).